The chain runs to 140 residues: Protein ripply1 (140 aa).

Positions 28 to 31 (WRPW) match the WRPW motif; required for gro2-binding motif. The tract at residues 71-106 (HPVRLYWPRSKSFDYLFSDGEALLRNFPVQATINFY) is ripply homology domain. Positions 107 to 126 (DESDSEDEEESCDEDDESDV) are disordered.

Belongs to the ripply family. Interacts with gro2 via the WRPW motif. As to expression, expressed in the embryonic anterior presomitic mesoderm and in newly formed somites.

Its subcellular location is the nucleus. Functionally, plays a role in somitogenesis. Essential for transcriptional repression of the segmental patterning genes, thus terminating the segmentation program in the presomitic mesoderm, and also required for the maintenance of rostrocaudal polarity in somites. The chain is Protein ripply1 from Danio rerio (Zebrafish).